A 164-amino-acid polypeptide reads, in one-letter code: MDKVIYPGTFDPITHGHEDLVYRASRLFGKVIVAVAVSSGKAPFFSLEERVKMARNVLTGYSNVEVTGFSGLLMEFARQQDAHIIIRGLRAVSDFEYEFQLAGMNRGLYPDVETIFLTPSEQYMFISATIVREIARLGGDVSKFVHPLVIERLRQKKIEMNNGE.

Substrate is bound at residue Thr9. Residues 9–10 (TF) and His17 contribute to the ATP site. The substrate site is built by Lys41, Leu73, and Arg87. ATP contacts are provided by residues 88-90 (GLR), Glu98, and 123-129 (YMFISAT).

It belongs to the bacterial CoaD family. Homohexamer. Requires Mg(2+) as cofactor.

Its subcellular location is the cytoplasm. It catalyses the reaction (R)-4'-phosphopantetheine + ATP + H(+) = 3'-dephospho-CoA + diphosphate. It participates in cofactor biosynthesis; coenzyme A biosynthesis; CoA from (R)-pantothenate: step 4/5. Reversibly transfers an adenylyl group from ATP to 4'-phosphopantetheine, yielding dephospho-CoA (dPCoA) and pyrophosphate. The protein is Phosphopantetheine adenylyltransferase of Nitrosomonas eutropha (strain DSM 101675 / C91 / Nm57).